The chain runs to 414 residues: Putative competence-damage inducible protein (414 aa).

It belongs to the CinA family.

This Clostridium novyi (strain NT) protein is Putative competence-damage inducible protein.